The primary structure comprises 239 residues: Purine nucleoside phosphorylase DeoD-type (239 aa).

His-5 serves as a coordination point for a purine D-ribonucleoside. Phosphate-binding positions include Gly-21, Arg-25, Arg-44, and 88 to 91 (RVGS). A purine D-ribonucleoside is bound by residues 180-182 (EME) and 204-205 (SD). Catalysis depends on Asp-205, which acts as the Proton donor.

It belongs to the PNP/UDP phosphorylase family. In terms of assembly, homohexamer; trimer of homodimers.

It catalyses the reaction a purine D-ribonucleoside + phosphate = a purine nucleobase + alpha-D-ribose 1-phosphate. It carries out the reaction a purine 2'-deoxy-D-ribonucleoside + phosphate = a purine nucleobase + 2-deoxy-alpha-D-ribose 1-phosphate. Catalyzes the reversible phosphorolytic breakdown of the N-glycosidic bond in the beta-(deoxy)ribonucleoside molecules, with the formation of the corresponding free purine bases and pentose-1-phosphate. This is Purine nucleoside phosphorylase DeoD-type from Erwinia tasmaniensis (strain DSM 17950 / CFBP 7177 / CIP 109463 / NCPPB 4357 / Et1/99).